The primary structure comprises 156 residues: ATP synthase subunit b 2 (156 aa).

A helical membrane pass occupies residues 11-31 (LLAFIFFVWFCMKFVWPPIMG).

It belongs to the ATPase B chain family. In terms of assembly, F-type ATPases have 2 components, F(1) - the catalytic core - and F(0) - the membrane proton channel. F(1) has five subunits: alpha(3), beta(3), gamma(1), delta(1), epsilon(1). F(0) has three main subunits: a(1), b(2) and c(10-14). The alpha and beta chains form an alternating ring which encloses part of the gamma chain. F(1) is attached to F(0) by a central stalk formed by the gamma and epsilon chains, while a peripheral stalk is formed by the delta and b chains.

The protein resides in the cell inner membrane. Functionally, f(1)F(0) ATP synthase produces ATP from ADP in the presence of a proton or sodium gradient. F-type ATPases consist of two structural domains, F(1) containing the extramembraneous catalytic core and F(0) containing the membrane proton channel, linked together by a central stalk and a peripheral stalk. During catalysis, ATP synthesis in the catalytic domain of F(1) is coupled via a rotary mechanism of the central stalk subunits to proton translocation. In terms of biological role, component of the F(0) channel, it forms part of the peripheral stalk, linking F(1) to F(0). The protein is ATP synthase subunit b 2 of Pseudoalteromonas atlantica (strain T6c / ATCC BAA-1087).